A 264-amino-acid chain; its full sequence is Dehydrodolichyl diphosphate synthase complex subunit SPAC4D7.04c (264 aa).

The protein belongs to the UPP synthase family. Forms an active dehydrodolichyl diphosphate synthase complex with nus1. Mg(2+) is required as a cofactor.

Its subcellular location is the endoplasmic reticulum membrane. The enzyme catalyses n isopentenyl diphosphate + (2E,6E)-farnesyl diphosphate = a di-trans,poly-cis-polyprenyl diphosphate + n diphosphate. It functions in the pathway protein modification; protein glycosylation. Its function is as follows. With nus1, forms the dehydrodolichyl diphosphate synthase (DDS) complex, an essential component of the dolichol monophosphate (Dol-P) biosynthetic machinery. Adds multiple copies of isopentenyl pyrophosphate (IPP) to farnesyl pyrophosphate (FPP) to produce dehydrodolichyl diphosphate (Dedol-PP), a precursor of dolichol which is utilized as a sugar carrier in protein glycosylation in the endoplasmic reticulum (ER). The polypeptide is Dehydrodolichyl diphosphate synthase complex subunit SPAC4D7.04c (Schizosaccharomyces pombe (strain 972 / ATCC 24843) (Fission yeast)).